We begin with the raw amino-acid sequence, 343 residues long: Ribosomal RNA small subunit methyltransferase C (343 aa).

It belongs to the methyltransferase superfamily. RsmC family. As to quaternary structure, monomer.

Its subcellular location is the cytoplasm. The catalysed reaction is guanosine(1207) in 16S rRNA + S-adenosyl-L-methionine = N(2)-methylguanosine(1207) in 16S rRNA + S-adenosyl-L-homocysteine + H(+). Functionally, specifically methylates the guanine in position 1207 of 16S rRNA in the 30S particle. The protein is Ribosomal RNA small subunit methyltransferase C of Shigella boydii serotype 4 (strain Sb227).